The sequence spans 254 residues: 5'-nucleotidase SurE (254 aa).

Positions 8, 9, 40, and 93 each coordinate a divalent metal cation.

This sequence belongs to the SurE nucleotidase family. Requires a divalent metal cation as cofactor.

Its subcellular location is the cytoplasm. It catalyses the reaction a ribonucleoside 5'-phosphate + H2O = a ribonucleoside + phosphate. Its function is as follows. Nucleotidase that shows phosphatase activity on nucleoside 5'-monophosphates. This Rhizorhabdus wittichii (strain DSM 6014 / CCUG 31198 / JCM 15750 / NBRC 105917 / EY 4224 / RW1) (Sphingomonas wittichii) protein is 5'-nucleotidase SurE.